A 638-amino-acid chain; its full sequence is Chaperone protein DnaK (638 aa).

Position 197 is a phosphothreonine; by autocatalysis (threonine 197). The segment at 598–638 (QQSAPSGAAAGPDEGAPSGSGGTSGTRGGDDVIDAEFTETK) is disordered. Residues 615-624 (SGSGGTSGTR) show a composition bias toward gly residues. Positions 628–638 (DVIDAEFTETK) are enriched in acidic residues.

Belongs to the heat shock protein 70 family.

In terms of biological role, acts as a chaperone. The chain is Chaperone protein DnaK from Gloeobacter violaceus (strain ATCC 29082 / PCC 7421).